A 436-amino-acid polypeptide reads, in one-letter code: Glutamyl-tRNA reductase (436 aa).

Substrate is bound by residues 49–52 (TCNR), Ser-109, 114–116 (EGQ), and Gln-120. Residue Cys-50 is the Nucleophile of the active site. 198–203 (GAGRMS) is an NADP(+) binding site.

It belongs to the glutamyl-tRNA reductase family. As to quaternary structure, homodimer.

It carries out the reaction (S)-4-amino-5-oxopentanoate + tRNA(Glu) + NADP(+) = L-glutamyl-tRNA(Glu) + NADPH + H(+). Its pathway is porphyrin-containing compound metabolism; protoporphyrin-IX biosynthesis; 5-aminolevulinate from L-glutamyl-tRNA(Glu): step 1/2. The protein operates within porphyrin-containing compound metabolism; chlorophyll biosynthesis. In terms of biological role, catalyzes the NADPH-dependent reduction of glutamyl-tRNA(Glu) to glutamate 1-semialdehyde (GSA). In Prochlorococcus marinus (strain MIT 9313), this protein is Glutamyl-tRNA reductase.